Here is a 274-residue protein sequence, read N- to C-terminus: Exosome complex component Rrp42 (274 aa).

Belongs to the RNase PH family. Rrp42 subfamily. As to quaternary structure, component of the archaeal exosome complex. Forms a hexameric ring-like arrangement composed of 3 Rrp41-Rrp42 heterodimers. The hexameric ring associates with a trimer of Rrp4 and/or Csl4 subunits.

The protein localises to the cytoplasm. In terms of biological role, non-catalytic component of the exosome, which is a complex involved in RNA degradation. Contributes to the structuring of the Rrp41 active site. In Pyrococcus abyssi (strain GE5 / Orsay), this protein is Exosome complex component Rrp42.